The primary structure comprises 295 residues: MGHFSEELQQVQTRINRFLEAQFEGIESHNAPLLEAMKYALLLGGKRVRPFLVYATGQMLGAEKQTLDYAAAAIEAIHAYSLIHDDLPAMDDDNLRRGHPTCHIQFDEATAILAGDALQSFAFEILTKTPNISTEQKLALIQILAQGAGVQGMCLGQSLDLISEHKQISLSELELIHRNKTGALLIAALKLGFICSPHFTDKRLEQSLTQYAEAIGLAFQVQDDILDIEGDSAEIGKQVGADLDLDKSTYPKLLGLSGAKQKAQDLYQSALSELEKIPFDTTVRALAEFIITRKS.

Isopentenyl diphosphate is bound by residues K46, R49, and H78. D85 and D91 together coordinate Mg(2+). R96 lines the (2E)-geranyl diphosphate pocket. R97 is a binding site for isopentenyl diphosphate. Residues K180, T181, Q220, and K237 each contribute to the (2E)-geranyl diphosphate site.

The protein belongs to the FPP/GGPP synthase family. Requires Mg(2+) as cofactor.

It localises to the cytoplasm. It catalyses the reaction isopentenyl diphosphate + (2E)-geranyl diphosphate = (2E,6E)-farnesyl diphosphate + diphosphate. This Haemophilus influenzae (strain ATCC 51907 / DSM 11121 / KW20 / Rd) protein is Farnesyl diphosphate synthase (ispA).